The primary structure comprises 296 residues: Nucleotide-binding protein Pnec_1620 (296 aa).

8–15 (GISGSGKS) is a binding site for ATP. 57–60 (DARR) provides a ligand contact to GTP.

Belongs to the RapZ-like family.

Displays ATPase and GTPase activities. The sequence is that of Nucleotide-binding protein Pnec_1620 from Polynucleobacter necessarius subsp. necessarius (strain STIR1).